The primary structure comprises 326 residues: DNA-directed RNA polymerase subunit alpha (326 aa).

Residues 1–231 (MQTALLKPKI…DQLSVFAALE (231 aa)) are alpha N-terminal domain (alpha-NTD). Residues 247–326 (IDPILLRPVD…ENWPPAGLEK (80 aa)) form an alpha C-terminal domain (alpha-CTD) region.

It belongs to the RNA polymerase alpha chain family. Homodimer. The RNAP catalytic core consists of 2 alpha, 1 beta, 1 beta' and 1 omega subunit. When a sigma factor is associated with the core the holoenzyme is formed, which can initiate transcription.

It carries out the reaction RNA(n) + a ribonucleoside 5'-triphosphate = RNA(n+1) + diphosphate. DNA-dependent RNA polymerase catalyzes the transcription of DNA into RNA using the four ribonucleoside triphosphates as substrates. This Cupriavidus metallidurans (strain ATCC 43123 / DSM 2839 / NBRC 102507 / CH34) (Ralstonia metallidurans) protein is DNA-directed RNA polymerase subunit alpha.